Reading from the N-terminus, the 283-residue chain is Thymidylate synthase (283 aa).

Arg-22 serves as a coordination point for dUMP. The active-site Nucleophile is Cys-160. DUMP-binding positions include 180–183 (RSCD), Asn-191, and 221–223 (HIY). Asp-183 contributes to the (6R)-5,10-methylene-5,6,7,8-tetrahydrofolate binding site. Position 282 (Ser-282) interacts with (6R)-5,10-methylene-5,6,7,8-tetrahydrofolate.

The protein belongs to the thymidylate synthase family. Bacterial-type ThyA subfamily. In terms of assembly, homodimer.

The protein resides in the cytoplasm. The enzyme catalyses dUMP + (6R)-5,10-methylene-5,6,7,8-tetrahydrofolate = 7,8-dihydrofolate + dTMP. Its pathway is pyrimidine metabolism; dTTP biosynthesis. Its function is as follows. Catalyzes the reductive methylation of 2'-deoxyuridine-5'-monophosphate (dUMP) to 2'-deoxythymidine-5'-monophosphate (dTMP) while utilizing 5,10-methylenetetrahydrofolate (mTHF) as the methyl donor and reductant in the reaction, yielding dihydrofolate (DHF) as a by-product. This enzymatic reaction provides an intracellular de novo source of dTMP, an essential precursor for DNA biosynthesis. The sequence is that of Thymidylate synthase from Tolumonas auensis (strain DSM 9187 / NBRC 110442 / TA 4).